We begin with the raw amino-acid sequence, 31 residues long: Cytochrome b6-f complex subunit 6 (31 aa).

Residues 4-24 (ITSYFGFLLAALTITSALFIG) traverse the membrane as a helical segment.

This sequence belongs to the PetL family. In terms of assembly, the 4 large subunits of the cytochrome b6-f complex are cytochrome b6, subunit IV (17 kDa polypeptide, PetD), cytochrome f and the Rieske protein, while the 4 small subunits are PetG, PetL, PetM and PetN. The complex functions as a dimer.

It is found in the plastid. The protein resides in the chloroplast thylakoid membrane. Functionally, component of the cytochrome b6-f complex, which mediates electron transfer between photosystem II (PSII) and photosystem I (PSI), cyclic electron flow around PSI, and state transitions. PetL is important for photoautotrophic growth as well as for electron transfer efficiency and stability of the cytochrome b6-f complex. The protein is Cytochrome b6-f complex subunit 6 of Gossypium hirsutum (Upland cotton).